We begin with the raw amino-acid sequence, 90 residues long: Putative regulatory protein Dred_1699 (90 aa).

This sequence belongs to the RemA family.

The protein is Putative regulatory protein Dred_1699 of Desulforamulus reducens (strain ATCC BAA-1160 / DSM 100696 / MI-1) (Desulfotomaculum reducens).